We begin with the raw amino-acid sequence, 399 residues long: Probable 3-ketosteroid-9-alpha-monooxygenase, oxygenase component (399 aa).

Positions Trp-26–Val-128 constitute a Rieske domain. [2Fe-2S] cluster is bound by residues Cys-67, His-69, Cys-86, and His-89. Residues Asn-175, His-181, His-186, and Asp-307 each contribute to the Fe cation site.

In terms of assembly, homotrimer. The two-component system 3-ketosteroid-9-alpha-monooxygenase is composed of an oxygenase component KshA and a reductase component KshB. [2Fe-2S] cluster is required as a cofactor. It depends on Fe cation as a cofactor.

Functionally, could catalyze the introduction of a 9alpha-hydroxyl moiety into the ring B of 3-ketosteroid substrates. The protein is Probable 3-ketosteroid-9-alpha-monooxygenase, oxygenase component of Rhodococcus rhodochrous.